Here is a 213-residue protein sequence, read N- to C-terminus: MFMNRLFGKPKQETSTLQTLDKLNETLEMLEKKENVLLKKATGEVEKAKEFSRAKNKRAAIQCLKRKRLYEQQVEQLGNFQLRIHDQMIMLEGAKATTETVDALRTGASAMKAMQKATNIDDVDKTMDEINEQTENMKQIQEALSAPFGANDFDEDELEAELDELEGAELEEQLLQPVPIHVPQGNKPARAPAQKQPTAEEDELAALQAEMAL.

2 coiled-coil regions span residues 11–42 (KQETSTLQTLDKLNETLEMLEKKENVLLKKAT) and 118–176 (TNID…QLLQ). The interval 180-213 (IHVPQGNKPARAPAQKQPTAEEDELAALQAEMAL) is disordered.

This sequence belongs to the SNF7 family. As to quaternary structure, component of the endosomal sorting required for transport complex III (ESCRT-III), composed at least of VPS2, VPS20, VPS24 and VPS32. Interacts with SKD1. Interacts with BRO1/ALIX.

It localises to the endosome. Its function is as follows. Component of the ESCRT-III complex, which is required for multivesicular bodies (MVBs) formation and sorting of endosomal cargo proteins into MVBs. The ESCRT-III complex is probably involved in the concentration of MVB cargo. The protein is Vacuolar protein sorting-associated protein 32 homolog 1 (VPS32.1) of Arabidopsis thaliana (Mouse-ear cress).